We begin with the raw amino-acid sequence, 415 residues long: Serine hydroxymethyltransferase (415 aa).

Residues Leu-117 and 121–123 (GHL) each bind (6S)-5,6,7,8-tetrahydrofolate. Position 226 is an N6-(pyridoxal phosphate)lysine (Lys-226). (6S)-5,6,7,8-tetrahydrofolate is bound by residues Glu-241 and 349 to 351 (SPF).

It belongs to the SHMT family. In terms of assembly, homodimer. It depends on pyridoxal 5'-phosphate as a cofactor.

The protein localises to the cytoplasm. It catalyses the reaction (6R)-5,10-methylene-5,6,7,8-tetrahydrofolate + glycine + H2O = (6S)-5,6,7,8-tetrahydrofolate + L-serine. Its pathway is one-carbon metabolism; tetrahydrofolate interconversion. It functions in the pathway amino-acid biosynthesis; glycine biosynthesis; glycine from L-serine: step 1/1. Its function is as follows. Catalyzes the reversible interconversion of serine and glycine with tetrahydrofolate (THF) serving as the one-carbon carrier. This reaction serves as the major source of one-carbon groups required for the biosynthesis of purines, thymidylate, methionine, and other important biomolecules. Also exhibits THF-independent aldolase activity toward beta-hydroxyamino acids, producing glycine and aldehydes, via a retro-aldol mechanism. This is Serine hydroxymethyltransferase from Geotalea uraniireducens (strain Rf4) (Geobacter uraniireducens).